The sequence spans 221 residues: GTP cyclohydrolase-2 (221 aa).

GTP is bound at residue 63 to 67 (RLHSE). 3 residues coordinate Zn(2+): cysteine 68, cysteine 79, and cysteine 81. GTP is bound by residues glutamine 84, 107 to 109 (EGR), and threonine 129. Aspartate 141 functions as the Proton acceptor in the catalytic mechanism. Residue arginine 143 is the Nucleophile of the active site. Serine 164 and lysine 169 together coordinate GTP.

This sequence belongs to the GTP cyclohydrolase II family. Requires Zn(2+) as cofactor.

The catalysed reaction is GTP + 4 H2O = 2,5-diamino-6-hydroxy-4-(5-phosphoribosylamino)-pyrimidine + formate + 2 phosphate + 3 H(+). The protein operates within cofactor biosynthesis; riboflavin biosynthesis; 5-amino-6-(D-ribitylamino)uracil from GTP: step 1/4. In terms of biological role, catalyzes the conversion of GTP to 2,5-diamino-6-ribosylamino-4(3H)-pyrimidinone 5'-phosphate (DARP), formate and pyrophosphate. In Streptomyces coelicolor (strain ATCC BAA-471 / A3(2) / M145), this protein is GTP cyclohydrolase-2.